The following is a 306-amino-acid chain: D-alanine--D-alanine ligase (306 aa).

The region spanning lysine 101 to glutamate 303 is the ATP-grasp domain. Valine 134–threonine 189 lines the ATP pocket. Mg(2+)-binding residues include aspartate 257, glutamate 270, and asparagine 272.

This sequence belongs to the D-alanine--D-alanine ligase family. It depends on Mg(2+) as a cofactor. Requires Mn(2+) as cofactor.

The protein resides in the cytoplasm. The catalysed reaction is 2 D-alanine + ATP = D-alanyl-D-alanine + ADP + phosphate + H(+). It functions in the pathway cell wall biogenesis; peptidoglycan biosynthesis. Functionally, cell wall formation. The sequence is that of D-alanine--D-alanine ligase from Photorhabdus laumondii subsp. laumondii (strain DSM 15139 / CIP 105565 / TT01) (Photorhabdus luminescens subsp. laumondii).